Consider the following 377-residue polypeptide: NADH dehydrogenase [ubiquinone] 1 alpha subcomplex subunit 9, mitochondrial (377 aa).

A mitochondrion-targeting transit peptide spans 1-35; the sequence is MAAAAQSRVVRVLSMSRSAITAIATSVCHGPPCRQ. Lys175 is subject to N6-succinyllysine. N6-acetyllysine is present on residues Lys189 and Lys370.

Belongs to the complex I NDUFA9 subunit family. Complex I is composed of 45 different subunits. This a component of the hydrophobic protein fraction. Interacts with BLOC1S1. Interacts with SLC2A4. Interacts with CLOCK. Interacts with RAB5IF. The cofactor is FAD. Post-translationally, acetylated on lysine residues. BLOC1S1 is required for acetylation. Acetylated by CLOCK in a circadian manner.

It is found in the mitochondrion matrix. Accessory subunit of the mitochondrial membrane respiratory chain NADH dehydrogenase (Complex I), that is believed not to be involved in catalysis. Required for proper complex I assembly. Complex I functions in the transfer of electrons from NADH to the respiratory chain. The immediate electron acceptor for the enzyme is believed to be ubiquinone. In Homo sapiens (Human), this protein is NADH dehydrogenase [ubiquinone] 1 alpha subcomplex subunit 9, mitochondrial (NDUFA9).